Consider the following 405-residue polypeptide: uncharacterized protein (405 aa).

Disordered regions lie at residues 1 to 21 (MSKK…ESKT), 150 to 179 (IKDE…QEGP), and 285 to 405 (DDED…KSRS). Polar residues predominate over residues 7–16 (KNASPKNNSD). 2 stretches are compositionally biased toward acidic residues: residues 312 to 331 (SDDE…DDEE) and 349 to 358 (DDEDDEEEGE). 2 stretches are compositionally biased toward basic residues: residues 365–374 (SSKKSSKKAS) and 390–405 (PKKK…KSRS).

This is an uncharacterized protein from Acanthamoeba polyphaga (Amoeba).